Here is an 857-residue protein sequence, read N- to C-terminus: Phosphoenolpyruvate carboxylase (857 aa).

Active-site residues include H144 and K530.

The protein belongs to the PEPCase type 1 family. Homotetramer. Mg(2+) is required as a cofactor. Post-translationally, the N-terminus is blocked.

The enzyme catalyses oxaloacetate + phosphate = phosphoenolpyruvate + hydrogencarbonate. Its function is as follows. Forms oxaloacetate, a four-carbon dicarboxylic acid source for the tricarboxylic acid cycle. This Thermus sp. (strain 71) protein is Phosphoenolpyruvate carboxylase (ppc).